Consider the following 210-residue polypeptide: Imidazole glycerol phosphate synthase subunit HisH (210 aa).

The region spanning 1 to 210 (MIAILDYGMG…KLLENFIRFI (210 aa)) is the Glutamine amidotransferase type-1 domain. Cys-79 (nucleophile) is an active-site residue. Active-site residues include His-191 and Glu-193.

Heterodimer of HisH and HisF.

The protein resides in the cytoplasm. The catalysed reaction is 5-[(5-phospho-1-deoxy-D-ribulos-1-ylimino)methylamino]-1-(5-phospho-beta-D-ribosyl)imidazole-4-carboxamide + L-glutamine = D-erythro-1-(imidazol-4-yl)glycerol 3-phosphate + 5-amino-1-(5-phospho-beta-D-ribosyl)imidazole-4-carboxamide + L-glutamate + H(+). It carries out the reaction L-glutamine + H2O = L-glutamate + NH4(+). The protein operates within amino-acid biosynthesis; L-histidine biosynthesis; L-histidine from 5-phospho-alpha-D-ribose 1-diphosphate: step 5/9. Functionally, IGPS catalyzes the conversion of PRFAR and glutamine to IGP, AICAR and glutamate. The HisH subunit catalyzes the hydrolysis of glutamine to glutamate and ammonia as part of the synthesis of IGP and AICAR. The resulting ammonia molecule is channeled to the active site of HisF. The chain is Imidazole glycerol phosphate synthase subunit HisH from Leptospira interrogans serogroup Icterohaemorrhagiae serovar copenhageni (strain Fiocruz L1-130).